The following is a 983-amino-acid chain: MTVENAKALFFERNLCALTPLDPERASAFLADLEARAREEELAGVVALLGRKKAADFLSAILDLSPFIREALTRQPRILDRIVSATPESALEAILDEISASGTVAGVSESELMTSLRQLKREAHVLIALCDLARIFNTETTTDRLTDLAEACTGAAVRFLLLDADAAGRINLPDRSNPEKDCGWIVLGMGKFGARELNYSSDIDLIVFIDETKPAIGDPYECVDTFSRLTRRLVRILQDRTGDGYVFRVDLRLRPDPGSTPLAIPVGAALHYYEGRGQNWERAAMIKARPVAGDRLSGKQILAELSPYVWRKYLDYAAIADVHSIKRQIHAHKGHGDIAVRGHNVKLGRGGIREIEFFVQTQQLIAGGRFPELRGNQTVPMLARLAERGWITQQARDALAQEYWFLRDVEHRIQMIVDEQTHILPEDDEGFARVSHMMGYADPAEFSEIFLAALKVVEKQYAALFAQAPELGAASGNLVFTGDVDDPGTLETLSAMGYERSSDICRVIRTWHFGRYRATQSAEARERLTELTPALLKAFAETRRADESLRRFDGFLQGLPAGIQLFSLLQSNPRLLNLLVMIMSAAPRLADIITRNPHVFDGLLDPAIFSEVPTRAYLEERLRAFLGSATDFEEVLDRLRIFAAEHRFLIGIRLLTGAINGVRAGQAFSDLAELMVGRALEAVEAELQRRHGKVKGAKVALLAMGKLGSRELTAGSDVDLILLYDHDKDAEESDGEKPLAPSQYYIRLTQRLIAALSAPTAEGVLYEVDMRLRPSGNKGPVATHIEAFGKYQRNDAWTWEHMALTRARPIHGDEAFIARIKVDIEDVLAMPRDVRKLAGDVREMRELIAQEKPPRDDWDLKLKPGGIIDLEFIAQFATLAGYVKKTPRPFATEEVLANLDPFFADPAMVDGLVEAHRFYTNLSQAIRLCLNDSAGLDQFPPGMRELLCRVAGLPDIERIEYELLEHYRLVRAAFDKLVGHGAD.

Positions 1 to 468 (MTVENAKALF…KQYAALFAQA (468 aa)) are adenylyl removase. The adenylyl transferase stretch occupies residues 473–983 (AASGNLVFTG…FDKLVGHGAD (511 aa)).

Belongs to the GlnE family. Mg(2+) serves as cofactor.

It catalyses the reaction [glutamine synthetase]-O(4)-(5'-adenylyl)-L-tyrosine + phosphate = [glutamine synthetase]-L-tyrosine + ADP. The enzyme catalyses [glutamine synthetase]-L-tyrosine + ATP = [glutamine synthetase]-O(4)-(5'-adenylyl)-L-tyrosine + diphosphate. In terms of biological role, involved in the regulation of glutamine synthetase GlnA, a key enzyme in the process to assimilate ammonia. When cellular nitrogen levels are high, the C-terminal adenylyl transferase (AT) inactivates GlnA by covalent transfer of an adenylyl group from ATP to specific tyrosine residue of GlnA, thus reducing its activity. Conversely, when nitrogen levels are low, the N-terminal adenylyl removase (AR) activates GlnA by removing the adenylyl group by phosphorolysis, increasing its activity. The regulatory region of GlnE binds the signal transduction protein PII (GlnB) which indicates the nitrogen status of the cell. This is Bifunctional glutamine synthetase adenylyltransferase/adenylyl-removing enzyme from Brucella suis biovar 1 (strain 1330).